Consider the following 1162-residue polypeptide: Leptin receptor (1162 aa).

The signal sequence occupies residues 1-21; it reads MMCQKFYVVLLHWEFLYVIAA. The Extracellular portion of the chain corresponds to 22-839; the sequence is LNLAYPISPW…AIDKQQNDAG (818 aa). Cystine bridges form between C37–C90, C89–C99, C131–C142, C186–C195, and C188–C193. Residues N41, N56, N73, and N98 are each glycosylated (N-linked (GlcNAc...) asparagine). A glycan (N-linked (GlcNAc...) asparagine) is linked at N187. Residues 238-331 enclose the Fibronectin type-III 1 domain; sequence PPLGLHMEVT…SPQVFTTQDV (94 aa). 2 N-linked (GlcNAc...) asparagine glycosylation sites follow: N275 and N345. Residues 329–427 form the Ig-like domain; that stretch reads QDVVYFPPKI…HRYAELYVID (99 aa). 2 cysteine pairs are disulfide-bonded: C350-C410 and C411-C416. N-linked (GlcNAc...) asparagine glycosylation is present at N431. 3 disulfides stabilise this stretch: C434/C445, C471/C526, and C486/C496. Residues 465–482 are leptin-binding; sequence HRRSLYCPDSPSIHPTSE. N-linked (GlcNAc...) asparagine glycosylation is found at N514, N622, N657, N668, N686, N695, N698, and N726. Fibronectin type-III domains lie at 537 to 632, 637 to 729, and 738 to 832; these read PPSN…TLVM, PMRG…NLTF, and AVES…DAID. The short motif at 620 to 624 is the WSXWS motif element; the sequence is WSNWS. Residues 840-860 form a helical membrane-spanning segment; the sequence is LYVIVPIIISSCVLLLGTLLI. The Cytoplasmic portion of the chain corresponds to 861 to 1162; sequence SHQRMKKLFW…MENKMCDLTV (302 aa). Positions 869–877 match the Box 1 motif motif; that stretch reads FWDDVPNPK. S880 carries the phosphoserine modification. The tract at residues 891 to 896 is required for JAK2 activation; it reads ETFEHL. The tract at residues 896 to 904 is required for STAT3 phosphorylation; that stretch reads LFTKHAESV. Y985 carries the phosphotyrosine; by JAK2 modification. Y1077 carries the phosphotyrosine modification. A Phosphotyrosine; by JAK2 modification is found at Y1138.

The protein belongs to the type I cytokine receptor family. Type 2 subfamily. As to quaternary structure, present as a mixture of monomers and dimers. The phosphorylated receptor binds a number of SH2 domain-containing proteins such as JAK2, STAT3, PTPN11, and SOCS3. Interaction with SOCS3 inhibits JAK/STAT signaling and MAPK cascade. On ligand binding, phosphorylated on two conserved C-terminal tyrosine residues (isoform B only) by JAK2. Tyr-985 is required for complete binding and activation of PTPN11, ERK/FOS activation,for interaction with SOCS3 and SOCS3 mediated inhibition of leptin signaling. Phosphorylation on Tyr-1138 is required for STAT3 binding/activation. Phosphorylation of Tyr-1077 has a more accessory role. As to expression, isoform A: highest level of expression in lung and kidney, also present in heart, brain, spleen, liver, muscle, choroid plexus and hypothalamus. Isoform B: highest levels of expression in hypothalamus and lower levels in brain, testes and adipose tissue. Expressed by neurons of the parabrachial nucleus. Expressed by peripheral blood mononuclear cells and CD4(+) T-cells. Isoform E: expressed in adipose tissue, liver, hypothalamus, cerebral microvessels, heart, and testes.

The protein localises to the cell membrane. It is found in the basolateral cell membrane. It localises to the secreted. In terms of biological role, receptor for hormone LEP/leptin. On ligand binding, mediates LEP central and peripheral effects through the activation of different signaling pathways such as JAK2/STAT3 and MAPK cascade/FOS. In the hypothalamus, LEP acts as an appetite-regulating factor that induces a decrease in food intake and an increase in energy consumption by inducing anorexinogenic factors and suppressing orexigenic neuropeptides, also regulates bone mass and secretion of hypothalamo-pituitary-adrenal hormones. In the periphery, increases basal metabolism, influences reproductive function, regulates pancreatic beta-cell function and insulin secretion, is pro-angiogenic and affects innate and adaptive immunity. Control of energy homeostasis and melanocortin production (stimulation of POMC and full repression of AgRP transcription) is mediated by STAT3 signaling, whereas distinct signals regulate NPY and the control of fertility, growth and glucose homeostasis. Involved in the regulation of counter-regulatory response to hypoglycemia by inhibiting neurons of the parabrachial nucleus. Has a specific effect on T lymphocyte responses, differentially regulating the proliferation of naive and memory T-cells. Leptin increases Th1 and suppresses Th2 cytokine production. Its function is as follows. May transport LEP across the blood-brain barrier. Binds LEP and mediates LEP endocytosis. Does not induce phosphorylation of and activate STAT3. Antagonizes Isoform A and isoform B-mediated LEP binding and endocytosis. The sequence is that of Leptin receptor (Lepr) from Mus musculus (Mouse).